The following is a 229-amino-acid chain: Prolactin (229 aa).

Positions 1-30 are cleaved as a signal peptide; the sequence is MDKKRSSLKGSLLLLLLLVSDLLLCKSVAS. Cys34 and Cys41 are disulfide-bonded. Ser56 bears the Phosphoserine mark. N-linked (GlcNAc...) asparagine; partial glycosylation is present at Asn61. 2 positions are modified to phosphoserine: Ser64 and Ser120. Disulfide bonds link Cys88/Cys204 and Cys221/Cys229.

It belongs to the somatotropin/prolactin family. Interacts with PRLR.

Its subcellular location is the secreted. Functionally, prolactin acts primarily on the mammary gland by promoting lactation. This chain is Prolactin (PRL), found in Equus caballus (Horse).